Reading from the N-terminus, the 255-residue chain is NAD kinase (255 aa).

Residue Asp44 is the Proton acceptor of the active site. Residues Asp44–Gly45, His49, Asn114–Glu115, Asp144, Ala152, Ser155–Ser160, and Gln216 each bind NAD(+).

It belongs to the NAD kinase family. The cofactor is a divalent metal cation.

The protein resides in the cytoplasm. It catalyses the reaction NAD(+) + ATP = ADP + NADP(+) + H(+). Involved in the regulation of the intracellular balance of NAD and NADP, and is a key enzyme in the biosynthesis of NADP. Catalyzes specifically the phosphorylation on 2'-hydroxyl of the adenosine moiety of NAD to yield NADP. This Rickettsia peacockii (strain Rustic) protein is NAD kinase.